The sequence spans 179 residues: Large ribosomal subunit protein uL5 (179 aa).

Belongs to the universal ribosomal protein uL5 family. In terms of assembly, part of the 50S ribosomal subunit; part of the 5S rRNA/L5/L18/L25 subcomplex. Contacts the 5S rRNA and the P site tRNA. Forms a bridge to the 30S subunit in the 70S ribosome.

Functionally, this is one of the proteins that bind and probably mediate the attachment of the 5S RNA into the large ribosomal subunit, where it forms part of the central protuberance. In the 70S ribosome it contacts protein S13 of the 30S subunit (bridge B1b), connecting the 2 subunits; this bridge is implicated in subunit movement. Contacts the P site tRNA; the 5S rRNA and some of its associated proteins might help stabilize positioning of ribosome-bound tRNAs. The chain is Large ribosomal subunit protein uL5 from Lysinibacillus sphaericus (strain C3-41).